A 70-amino-acid chain; its full sequence is Protein SlyX homolog (70 aa).

The protein belongs to the SlyX family.

This is Protein SlyX homolog from Nitrobacter winogradskyi (strain ATCC 25391 / DSM 10237 / CIP 104748 / NCIMB 11846 / Nb-255).